The sequence spans 184 residues: Photosystem I assembly protein Ycf4 (184 aa).

The next 2 helical transmembrane spans lie at 19 to 39 (ISNFCWAFILFLGSLGFLLVG) and 57 to 77 (IVFFPQGIVMSFYGIAGLFIS).

The protein belongs to the Ycf4 family.

Its subcellular location is the plastid. It localises to the chloroplast thylakoid membrane. Seems to be required for the assembly of the photosystem I complex. In Nicotiana tomentosiformis (Tobacco), this protein is Photosystem I assembly protein Ycf4.